The sequence spans 199 residues: Protein-methionine-sulfoxide reductase heme-binding subunit MsrQ (199 aa).

4 consecutive transmembrane segments (helical) span residues 8 to 28, 82 to 102, 116 to 136, and 153 to 173; these read IIWL…WLFW, LWCF…ELGI, PYLT…LTST, and VVYL…KVLS.

This sequence belongs to the MsrQ family. As to quaternary structure, heterodimer of a catalytic subunit (MsrP) and a heme-binding subunit (MsrQ). FMN serves as cofactor. It depends on heme b as a cofactor.

The protein localises to the cell inner membrane. In terms of biological role, part of the MsrPQ system that repairs oxidized periplasmic proteins containing methionine sulfoxide residues (Met-O), using respiratory chain electrons. Thus protects these proteins from oxidative-stress damage caused by reactive species of oxygen and chlorine generated by the host defense mechanisms. MsrPQ is essential for the maintenance of envelope integrity under bleach stress, rescuing a wide series of structurally unrelated periplasmic proteins from methionine oxidation, including the primary periplasmic chaperone SurA and the lipoprotein Pal. MsrQ provides electrons for reduction to the reductase catalytic subunit MsrP, using the quinone pool of the respiratory chain. The chain is Protein-methionine-sulfoxide reductase heme-binding subunit MsrQ from Salmonella arizonae (strain ATCC BAA-731 / CDC346-86 / RSK2980).